A 259-amino-acid chain; its full sequence is Deoxyribose-phosphate aldolase (259 aa).

The Proton donor/acceptor role is filled by aspartate 102. The active-site Schiff-base intermediate with acetaldehyde is the lysine 166. The active-site Proton donor/acceptor is the lysine 200.

This sequence belongs to the DeoC/FbaB aldolase family. DeoC type 2 subfamily.

It localises to the cytoplasm. It catalyses the reaction 2-deoxy-D-ribose 5-phosphate = D-glyceraldehyde 3-phosphate + acetaldehyde. The protein operates within carbohydrate degradation; 2-deoxy-D-ribose 1-phosphate degradation; D-glyceraldehyde 3-phosphate and acetaldehyde from 2-deoxy-alpha-D-ribose 1-phosphate: step 2/2. In terms of biological role, catalyzes a reversible aldol reaction between acetaldehyde and D-glyceraldehyde 3-phosphate to generate 2-deoxy-D-ribose 5-phosphate. This Vibrio cholerae serotype O1 (strain ATCC 39315 / El Tor Inaba N16961) protein is Deoxyribose-phosphate aldolase.